The following is a 296-amino-acid chain: Small ribosomal subunit protein uS2 (296 aa).

The segment covering Ala-274–Ala-284 has biased composition (low complexity). Residues Ala-274–Trp-296 are disordered.

It belongs to the universal ribosomal protein uS2 family. As to quaternary structure, component of the small ribosomal subunit. Mature ribosomes consist of a small (40S) and a large (60S) subunit. The 40S subunit contains about 33 different proteins and 1 molecule of RNA (18S). The 60S subunit contains about 49 different proteins and 3 molecules of RNA (25S, 5.8S and 5S). Interacts with RPS21.

It is found in the cytoplasm. In terms of biological role, required for the assembly and/or stability of the 40S ribosomal subunit. Required for the processing of the 20S rRNA-precursor to mature 18S rRNA in a late step of the maturation of 40S ribosomal subunits. The polypeptide is Small ribosomal subunit protein uS2 (Ajellomyces capsulatus (strain G186AR / H82 / ATCC MYA-2454 / RMSCC 2432) (Darling's disease fungus)).